We begin with the raw amino-acid sequence, 242 residues long: Ras-like protein family member 11A (242 aa).

Residues 17–241 (ESSSDYLLPK…SSKAKASSAL (225 aa)) are small GTPase-like. Residues 34–41 (GAGCVGKS), 81–88 (DTPGGIQA), and 147–150 (NKGD) each bind GTP.

It belongs to the small GTPase superfamily. Ras family. Interacts with UBF/UBTF.

It localises to the nucleus. The protein resides in the nucleolus. It catalyses the reaction GTP + H2O = GDP + phosphate + H(+). In terms of biological role, regulator of rDNA transcription. Acts in cooperation UBF/UBTF and positively regulates RNA polymerase I transcription. In Mus musculus (Mouse), this protein is Ras-like protein family member 11A.